The primary structure comprises 163 residues: Adenosine 5'-monophosphoramidase HINT2 (163 aa).

The transit peptide at 1-17 directs the protein to the mitochondrion; the sequence is MAAAVLLAVGLRAARRT. At Lys45 the chain carries N6-succinyllysine. In terms of domain architecture, HIT spans 55 to 163; sequence IFSRILDRSL…GGRQLQWPPG (109 aa). 2 residues coordinate AMP: Ser63 and Asp80. N6-acetyllysine is present on Lys119. Position 128 is an N6-acetyllysine; alternate (Lys128). Residue Lys128 is modified to N6-succinyllysine; alternate. AMP is bound at residue Asn136. Lys139 carries the post-translational modification N6-acetyllysine. AMP contacts are provided by residues 142–145 and 149–151; these read AQSV and HIH. Residues 147–151 carry the Histidine triad motif motif; the sequence is HLHIH. His149 acts as the Tele-AMP-histidine intermediate in catalysis.

Belongs to the HINT family.

The protein resides in the mitochondrion. It carries out the reaction adenosine 5'-phosphoramidate + H2O = AMP + NH4(+). In terms of biological role, exhibits adenosine 5'-monophosphoramidase activity, hydrolyzing purine nucleotide phosphoramidates with a single phosphate group such as adenosine 5'monophosphoramidate (AMP-NH2) to yield AMP and NH2. Hydrolyzes adenosine 5'-O-p-nitrophenylphosphoramidate (AMP-pNA). May be involved in steroid biosynthesis. May play a role in apoptosis. This is Adenosine 5'-monophosphoramidase HINT2 from Mus musculus (Mouse).